Here is a 269-residue protein sequence, read N- to C-terminus: 3-deoxy-manno-octulosonate cytidylyltransferase (269 aa).

The protein belongs to the KdsB family.

It localises to the cytoplasm. It carries out the reaction 3-deoxy-alpha-D-manno-oct-2-ulosonate + CTP = CMP-3-deoxy-beta-D-manno-octulosonate + diphosphate. It participates in nucleotide-sugar biosynthesis; CMP-3-deoxy-D-manno-octulosonate biosynthesis; CMP-3-deoxy-D-manno-octulosonate from 3-deoxy-D-manno-octulosonate and CTP: step 1/1. Its pathway is bacterial outer membrane biogenesis; lipopolysaccharide biosynthesis. Activates KDO (a required 8-carbon sugar) for incorporation into bacterial lipopolysaccharide in Gram-negative bacteria. The sequence is that of 3-deoxy-manno-octulosonate cytidylyltransferase from Cupriavidus taiwanensis (strain DSM 17343 / BCRC 17206 / CCUG 44338 / CIP 107171 / LMG 19424 / R1) (Ralstonia taiwanensis (strain LMG 19424)).